We begin with the raw amino-acid sequence, 521 residues long: Histidine--tRNA ligase (521 aa).

Residues 137–139 (DLT), arginine 164, glutamine 180, aspartate 184, arginine 338, and 342–343 (YY) contribute to the L-histidine site.

This sequence belongs to the class-II aminoacyl-tRNA synthetase family.

The enzyme catalyses tRNA(His) + L-histidine + ATP = L-histidyl-tRNA(His) + AMP + diphosphate + H(+). In terms of biological role, involved in protein synthesis. Catalyzes the specific attachment of an amino acid to its cognate tRNA in a 2 step reaction: the amino acid (AA) is first activated by ATP to form AA-AMP and then transferred to the acceptor end of the tRNA. Required for germ cell development. This is Histidine--tRNA ligase from Caenorhabditis elegans.